The primary structure comprises 593 residues: Mitoguardin 2 (593 aa).

Transmembrane regions (helical) follow at residues 11–31 and 42–62; these read MIQALAMTVAEIPVFLYTTFG and PGLRKVLFATALGTVALALAA. Disordered regions lie at residues 103–141 and 196–231; these read GYSSRRVQSPSSKSNDTLSGISSIEPSKHSGSSHSVASM and SVGQRGDSGSTPMPRDGLRNPETASEPLSEPESQRK. Low complexity-rich tracts occupy residues 106-116 and 123-141; these read SRRVQSPSSKS and ISSIEPSKHSGSSHSVASM. S132 carries the phosphoserine modification. The residue at position 206 (T206) is a Phosphothreonine. Phosphoserine is present on residues S220, S224, and S228. T273 bears the Phosphothreonine mark. Phosphoserine occurs at positions 276 and 295. Positions 292–298 match the FFAT motif; sequence SFFSATE.

This sequence belongs to the mitoguardin family. In terms of assembly, homodimer and heterodimer; forms heterodimers with MIGA1. Interacts with PLD6/MitoPLD. Interacts (via phosphorylated FFAT motif) with MOSPD2, VAPA and VAPB. Post-translationally, phosphorylation at Ser-295 of the FFAT motif activates interaction with MOSPD2, VAPA and VAPB.

The protein resides in the mitochondrion outer membrane. In terms of biological role, regulator of mitochondrial fusion: acts by forming homo- and heterodimers at the mitochondrial outer membrane and facilitating the formation of PLD6/MitoPLD dimers. May act by regulating phospholipid metabolism via PLD6/MitoPLD. This chain is Mitoguardin 2, found in Homo sapiens (Human).